Reading from the N-terminus, the 131-residue chain is Ribosome-binding factor A (131 aa).

Belongs to the RbfA family. In terms of assembly, monomer. Binds 30S ribosomal subunits, but not 50S ribosomal subunits or 70S ribosomes.

The protein localises to the cytoplasm. In terms of biological role, one of several proteins that assist in the late maturation steps of the functional core of the 30S ribosomal subunit. Associates with free 30S ribosomal subunits (but not with 30S subunits that are part of 70S ribosomes or polysomes). Required for efficient processing of 16S rRNA. May interact with the 5'-terminal helix region of 16S rRNA. The polypeptide is Ribosome-binding factor A (Vibrio vulnificus (strain CMCP6)).